A 192-amino-acid polypeptide reads, in one-letter code: Xanthine phosphoribosyltransferase (192 aa).

Xanthine-binding residues include leucine 20 and asparagine 27. A 5-phospho-alpha-D-ribose 1-diphosphate-binding site is contributed by 128-132; that stretch reads ANGDA. Lysine 156 is a xanthine binding site.

It belongs to the purine/pyrimidine phosphoribosyltransferase family. Xpt subfamily. As to quaternary structure, homodimer.

Its subcellular location is the cytoplasm. It catalyses the reaction XMP + diphosphate = xanthine + 5-phospho-alpha-D-ribose 1-diphosphate. It participates in purine metabolism; XMP biosynthesis via salvage pathway; XMP from xanthine: step 1/1. Functionally, converts the preformed base xanthine, a product of nucleic acid breakdown, to xanthosine 5'-monophosphate (XMP), so it can be reused for RNA or DNA synthesis. In Staphylococcus aureus (strain Mu3 / ATCC 700698), this protein is Xanthine phosphoribosyltransferase.